We begin with the raw amino-acid sequence, 334 residues long: Holliday junction branch migration complex subunit RuvB (334 aa).

Residues 4-184 (ADRLISAEPI…FGIVQRLEFY (181 aa)) form a large ATPase domain (RuvB-L) region. Residues Ile23, Arg24, Gly65, Lys68, Thr69, Thr70, 131–133 (EDY), Arg174, Tyr184, and Arg221 each bind ATP. Thr69 is a Mg(2+) binding site. The small ATPAse domain (RuvB-S) stretch occupies residues 185-255 (QVADLQHIVS…VAMQALDMLN (71 aa)). The segment at 258–334 (AEGFDYMDRK…YKHFGMVREE (77 aa)) is head domain (RuvB-H). Residues Arg294, Arg313, and Arg318 each contribute to the DNA site.

It belongs to the RuvB family. As to quaternary structure, homohexamer. Forms an RuvA(8)-RuvB(12)-Holliday junction (HJ) complex. HJ DNA is sandwiched between 2 RuvA tetramers; dsDNA enters through RuvA and exits via RuvB. An RuvB hexamer assembles on each DNA strand where it exits the tetramer. Each RuvB hexamer is contacted by two RuvA subunits (via domain III) on 2 adjacent RuvB subunits; this complex drives branch migration. In the full resolvosome a probable DNA-RuvA(4)-RuvB(12)-RuvC(2) complex forms which resolves the HJ.

The protein resides in the cytoplasm. The catalysed reaction is ATP + H2O = ADP + phosphate + H(+). Its function is as follows. The RuvA-RuvB-RuvC complex processes Holliday junction (HJ) DNA during genetic recombination and DNA repair, while the RuvA-RuvB complex plays an important role in the rescue of blocked DNA replication forks via replication fork reversal (RFR). RuvA specifically binds to HJ cruciform DNA, conferring on it an open structure. The RuvB hexamer acts as an ATP-dependent pump, pulling dsDNA into and through the RuvAB complex. RuvB forms 2 homohexamers on either side of HJ DNA bound by 1 or 2 RuvA tetramers; 4 subunits per hexamer contact DNA at a time. Coordinated motions by a converter formed by DNA-disengaged RuvB subunits stimulates ATP hydrolysis and nucleotide exchange. Immobilization of the converter enables RuvB to convert the ATP-contained energy into a lever motion, pulling 2 nucleotides of DNA out of the RuvA tetramer per ATP hydrolyzed, thus driving DNA branch migration. The RuvB motors rotate together with the DNA substrate, which together with the progressing nucleotide cycle form the mechanistic basis for DNA recombination by continuous HJ branch migration. Branch migration allows RuvC to scan DNA until it finds its consensus sequence, where it cleaves and resolves cruciform DNA. This chain is Holliday junction branch migration complex subunit RuvB, found in Serratia proteamaculans (strain 568).